We begin with the raw amino-acid sequence, 922 residues long: Up-regulator of cell proliferation (922 aa).

Residues 1 to 20 form a disordered region; it reads MASSGHSDLGEVTSEIKASE. Ser-3 carries the phosphoserine modification. Residues 680-920 enclose the VLIG-type G domain; that stretch reads RSRLVVLSAL…NIQQLIELVR (241 aa).

It belongs to the TRAFAC class dynamin-like GTPase superfamily. Very large inducible GTPase (VLIG) family.

The protein resides in the cytoplasm. Its subcellular location is the nucleus. Its function is as follows. May be involved in cell cycle progression through the regulation of cyclin D1 expression. This chain is Up-regulator of cell proliferation (URGCP), found in Bos taurus (Bovine).